The primary structure comprises 135 residues: DNA-directed RNA polymerase subunit omega (135 aa).

The interval 107–135 (ASQESQDYEVDGEIDDEINDQDGDEEVSV) is disordered. A compositionally biased stretch (acidic residues) spans 112–135 (QDYEVDGEIDDEINDQDGDEEVSV).

This sequence belongs to the RNA polymerase subunit omega family. In terms of assembly, the RNAP catalytic core consists of 2 alpha, 1 beta, 1 beta' and 1 omega subunit. When a sigma factor is associated with the core the holoenzyme is formed, which can initiate transcription.

It carries out the reaction RNA(n) + a ribonucleoside 5'-triphosphate = RNA(n+1) + diphosphate. In terms of biological role, promotes RNA polymerase assembly. Latches the N- and C-terminal regions of the beta' subunit thereby facilitating its interaction with the beta and alpha subunits. This Wolbachia pipientis wMel protein is DNA-directed RNA polymerase subunit omega.